A 415-amino-acid polypeptide reads, in one-letter code: Multidrug resistance protein MdtA (415 aa).

The first 21 residues, 1–21 (MKGSYKSRWVIVIVVVIAAIA), serve as a signal peptide directing secretion. A compositionally biased stretch (polar residues) spans 31–47 (DSQSAAPGATKQAQQSP). Disordered regions lie at residues 31–56 (DSQSAAPGATKQAQQSPAGGRRGMRA) and 390–415 (VVETQSATTPEEKATSREYAKKGARS). Residues 399-415 (PEEKATSREYAKKGARS) are compositionally biased toward basic and acidic residues.

The protein belongs to the membrane fusion protein (MFP) (TC 8.A.1) family. As to quaternary structure, part of a tripartite efflux system composed of MdtA, MdtB and MdtC.

It localises to the cell inner membrane. In terms of biological role, the MdtABC tripartite complex confers resistance against novobiocin and deoxycholate. The sequence is that of Multidrug resistance protein MdtA from Escherichia coli O6:H1 (strain CFT073 / ATCC 700928 / UPEC).